A 196-amino-acid polypeptide reads, in one-letter code: Probable malonic semialdehyde reductase RutE (196 aa).

The protein belongs to the nitroreductase family. HadB/RutE subfamily. It depends on FMN as a cofactor.

The catalysed reaction is 3-hydroxypropanoate + NADP(+) = 3-oxopropanoate + NADPH + H(+). Its function is as follows. May reduce toxic product malonic semialdehyde to 3-hydroxypropionic acid, which is excreted. In Escherichia coli (strain SMS-3-5 / SECEC), this protein is Probable malonic semialdehyde reductase RutE.